The following is a 195-amino-acid chain: Probable GTP-binding protein EngB (195 aa).

One can recognise an EngB-type G domain in the interval 24–195; sequence ELPEIALAGR…EAWDAILEKL (172 aa). Residues 32 to 39, 59 to 63, 77 to 80, 144 to 147, and 176 to 178 each bind GTP; these read GRSNVGKS, GKTQL, DVPG, TKAD, and FSS. Residues serine 39 and threonine 61 each contribute to the Mg(2+) site.

The protein belongs to the TRAFAC class TrmE-Era-EngA-EngB-Septin-like GTPase superfamily. EngB GTPase family. It depends on Mg(2+) as a cofactor.

Functionally, necessary for normal cell division and for the maintenance of normal septation. The sequence is that of Probable GTP-binding protein EngB from Streptococcus pneumoniae (strain JJA).